A 359-amino-acid chain; its full sequence is tRNA N6-adenosine threonylcarbamoyltransferase (359 aa).

Fe cation-binding residues include histidine 115 and histidine 119. Substrate contacts are provided by residues 137-141 (LVSGG), aspartate 170, glycine 183, and asparagine 283. Aspartate 311 provides a ligand contact to Fe cation. The disordered stretch occupies residues 328–359 (APDSLDIAPRSRWPLDEKSAPVFGTGRRGAKA).

This sequence belongs to the KAE1 / TsaD family. Fe(2+) serves as cofactor.

Its subcellular location is the cytoplasm. It carries out the reaction L-threonylcarbamoyladenylate + adenosine(37) in tRNA = N(6)-L-threonylcarbamoyladenosine(37) in tRNA + AMP + H(+). In terms of biological role, required for the formation of a threonylcarbamoyl group on adenosine at position 37 (t(6)A37) in tRNAs that read codons beginning with adenine. Is involved in the transfer of the threonylcarbamoyl moiety of threonylcarbamoyl-AMP (TC-AMP) to the N6 group of A37, together with TsaE and TsaB. TsaD likely plays a direct catalytic role in this reaction. In Brucella ovis (strain ATCC 25840 / 63/290 / NCTC 10512), this protein is tRNA N6-adenosine threonylcarbamoyltransferase.